The following is a 531-amino-acid chain: Methyl-accepting chemotaxis protein McpN (531 aa).

The Cytoplasmic segment spans residues 1-24 (MNESVARVFDRILRGLGLKTLNAQ). A helical transmembrane segment spans residues 25–45 (FLLSYALMFGLAACASVALYL). Residues 46 to 174 (SMSISPETIN…LMSARADSVQ (129 aa)) are Periplasmic-facing. The segment at 52–140 (ETINVAGAQR…AMLDQVAQPA (89 aa)) is pilJ-type. An N-box motif is present at residues 54–65 (INVAGAQRMLSQ). A nitrate-binding site is contributed by R61. A helical transmembrane segment spans residues 175-195 (HTQMWIAFGCLLAILVLVVLG). Topologically, residues 196 to 531 (RQFGLAPLMR…LRVVLGRFRT (336 aa)) are cytoplasmic. The region spanning 201–254 (APLMRQLRGLEVALTEVGAANFTHALAAGHADNEIGRIVAGYERMRQDVSGLLA) is the HAMP domain. Residues 259–495 (SAAETDKDVA…DIDRNITNVS (237 aa)) form the Methyl-accepting transducer domain.

This sequence belongs to the methyl-accepting chemotaxis (MCP) protein family. In terms of assembly, ligand free ligand-binding domain (LBD) is present in a monomer-dimer equilibrium. Nitrate binding to the periplasmic LBD stabilizes the homodimer.

It localises to the cell inner membrane. Chemotactic-signal transducers respond to changes in the concentration of attractants and repellents in the environment, transduce a signal from the outside to the inside of the cell, and facilitate sensory adaptation through the variation of the level of methylation. McpN is a chemoreceptor that recognizes specifically nitrate and mediates chemoattraction. Binds nitrate specifically and shows no affinity for other ligands such as nitrite. McpN-mediated taxis occurs only under nitrate starvation conditions. In Pseudomonas aeruginosa (strain ATCC 15692 / DSM 22644 / CIP 104116 / JCM 14847 / LMG 12228 / 1C / PRS 101 / PAO1), this protein is Methyl-accepting chemotaxis protein McpN.